The sequence spans 117 residues: Large ribosomal subunit protein bL19 (117 aa).

This sequence belongs to the bacterial ribosomal protein bL19 family.

Functionally, this protein is located at the 30S-50S ribosomal subunit interface and may play a role in the structure and function of the aminoacyl-tRNA binding site. The polypeptide is Large ribosomal subunit protein bL19 (Shewanella sediminis (strain HAW-EB3)).